We begin with the raw amino-acid sequence, 500 residues long: uncharacterized protein (500 aa).

This is an uncharacterized protein from Halorubrum sp. PV6 (HRPV-1).